Consider the following 251-residue polypeptide: tRNA (guanine-N(1)-)-methyltransferase (251 aa).

S-adenosyl-L-methionine contacts are provided by residues glycine 113 and 133 to 138 (IGDYVL).

Belongs to the RNA methyltransferase TrmD family. In terms of assembly, homodimer.

It is found in the cytoplasm. It carries out the reaction guanosine(37) in tRNA + S-adenosyl-L-methionine = N(1)-methylguanosine(37) in tRNA + S-adenosyl-L-homocysteine + H(+). Specifically methylates guanosine-37 in various tRNAs. In Pectobacterium carotovorum subsp. carotovorum (strain PC1), this protein is tRNA (guanine-N(1)-)-methyltransferase.